The sequence spans 579 residues: Arginine--tRNA ligase (579 aa).

The 'HIGH' region signature appears at 136-146 (ANPTGPLHIGH).

It belongs to the class-I aminoacyl-tRNA synthetase family. Monomer.

It localises to the cytoplasm. It catalyses the reaction tRNA(Arg) + L-arginine + ATP = L-arginyl-tRNA(Arg) + AMP + diphosphate. The protein is Arginine--tRNA ligase of Anaplasma marginale (strain St. Maries).